A 253-amino-acid polypeptide reads, in one-letter code: Ubiquinone biosynthesis O-methyltransferase (253 aa).

S-adenosyl-L-methionine is bound by residues R47, G78, D99, and M141.

It belongs to the methyltransferase superfamily. UbiG/COQ3 family.

It carries out the reaction a 3-demethylubiquinol + S-adenosyl-L-methionine = a ubiquinol + S-adenosyl-L-homocysteine + H(+). It catalyses the reaction a 3-(all-trans-polyprenyl)benzene-1,2-diol + S-adenosyl-L-methionine = a 2-methoxy-6-(all-trans-polyprenyl)phenol + S-adenosyl-L-homocysteine + H(+). It functions in the pathway cofactor biosynthesis; ubiquinone biosynthesis. Functionally, O-methyltransferase that catalyzes the 2 O-methylation steps in the ubiquinone biosynthetic pathway. This Rhodopseudomonas palustris (strain BisB5) protein is Ubiquinone biosynthesis O-methyltransferase.